Here is a 74-residue protein sequence, read N- to C-terminus: Cytochrome b559 subunit alpha (74 aa).

Residues 22-36 traverse the membrane as a helical segment; sequence VIHTVTIPSLFVAGW. A heme-binding site is contributed by H24.

Belongs to the PsbE/PsbF family. As to quaternary structure, heterodimer of an alpha subunit and a beta subunit. PSII is composed of 1 copy each of membrane proteins PsbA, PsbB, PsbC, PsbD, PsbE, PsbF, PsbH, PsbI, PsbJ, PsbK, PsbL, PsbM, PsbT, PsbX, PsbY, PsbZ, Psb30/Ycf12, at least 3 peripheral proteins of the oxygen-evolving complex and a large number of cofactors. It forms dimeric complexes. It depends on heme b as a cofactor.

It is found in the plastid. It localises to the cyanelle thylakoid membrane. In terms of biological role, this b-type cytochrome is tightly associated with the reaction center of photosystem II (PSII). PSII is a light-driven water:plastoquinone oxidoreductase that uses light energy to abstract electrons from H(2)O, generating O(2) and a proton gradient subsequently used for ATP formation. It consists of a core antenna complex that captures photons, and an electron transfer chain that converts photonic excitation into a charge separation. This chain is Cytochrome b559 subunit alpha, found in Cyanophora paradoxa.